Reading from the N-terminus, the 274-residue chain is 16S rRNA (guanine(1405)-N(7))-methyltransferase (274 aa).

S-adenosyl-L-methionine-binding positions include 102–108 (HISTRER), A133, D156, 182–183 (DL), L198, and Q207.

The protein belongs to the methyltransferase superfamily. Aminoglycoside resistance family.

The catalysed reaction is guanosine(1405) in 16S rRNA + S-adenosyl-L-methionine = N(7)-methylguanosine(1405) in 16S rRNA + S-adenosyl-L-homocysteine. Its function is as follows. Specifically methylates the N(7) position of guanine 1405 in 16S rRNA. Confers resistance to various aminoglycosides, including gentamicin, kanamycin and sisomicin. The chain is 16S rRNA (guanine(1405)-N(7))-methyltransferase (sgm) from Micromonospora zionensis.